The chain runs to 196 residues: Pyridoxal 5'-phosphate synthase subunit PdxT (196 aa).

56 to 58 (GES) is an L-glutamine binding site. The active-site Nucleophile is the Cys-85. Residues Arg-113 and 141–142 (IR) contribute to the L-glutamine site. Active-site charge relay system residues include His-177 and Glu-179.

The protein belongs to the glutaminase PdxT/SNO family. As to quaternary structure, in the presence of PdxS, forms a dodecamer of heterodimers. Only shows activity in the heterodimer.

The catalysed reaction is aldehydo-D-ribose 5-phosphate + D-glyceraldehyde 3-phosphate + L-glutamine = pyridoxal 5'-phosphate + L-glutamate + phosphate + 3 H2O + H(+). It carries out the reaction L-glutamine + H2O = L-glutamate + NH4(+). It functions in the pathway cofactor biosynthesis; pyridoxal 5'-phosphate biosynthesis. Catalyzes the hydrolysis of glutamine to glutamate and ammonia as part of the biosynthesis of pyridoxal 5'-phosphate. The resulting ammonia molecule is channeled to the active site of PdxS. In Methanospirillum hungatei JF-1 (strain ATCC 27890 / DSM 864 / NBRC 100397 / JF-1), this protein is Pyridoxal 5'-phosphate synthase subunit PdxT.